We begin with the raw amino-acid sequence, 205 residues long: 3-demethoxyubiquinol 3-hydroxylase (205 aa).

Glu-54, Glu-84, His-87, Glu-136, Glu-168, and His-171 together coordinate Fe cation.

This sequence belongs to the COQ7 family. It depends on Fe cation as a cofactor.

The protein resides in the cell membrane. The enzyme catalyses a 5-methoxy-2-methyl-3-(all-trans-polyprenyl)benzene-1,4-diol + AH2 + O2 = a 3-demethylubiquinol + A + H2O. Its pathway is cofactor biosynthesis; ubiquinone biosynthesis. Functionally, catalyzes the hydroxylation of 2-nonaprenyl-3-methyl-6-methoxy-1,4-benzoquinol during ubiquinone biosynthesis. In Delftia acidovorans (strain DSM 14801 / SPH-1), this protein is 3-demethoxyubiquinol 3-hydroxylase.